A 275-amino-acid chain; its full sequence is Glutamate racemase (275 aa).

Residues 12-13 (DS) and 44-45 (YG) contribute to the substrate site. The active-site Proton donor/acceptor is the C75. 76-77 (NT) lines the substrate pocket. The active-site Proton donor/acceptor is the C185. Residue 186–187 (TH) participates in substrate binding.

This sequence belongs to the aspartate/glutamate racemases family.

The enzyme catalyses L-glutamate = D-glutamate. It participates in cell wall biogenesis; peptidoglycan biosynthesis. Provides the (R)-glutamate required for cell wall biosynthesis. The polypeptide is Glutamate racemase (Mycolicibacterium paratuberculosis (strain ATCC BAA-968 / K-10) (Mycobacterium paratuberculosis)).